The primary structure comprises 317 residues: Tumor-associated calcium signal transducer 2 (317 aa).

An N-terminal signal peptide occupies residues 1–24; it reads MARGLDLAPLLLLLLAMVAGFCTA. Over 25–270 the chain is Extracellular; that stretch reads QINCTCPTNK…QFSMKRLTTG (246 aa). Asn-27 carries N-linked (GlcNAc...) asparagine glycosylation. One can recognise a Thyroglobulin type-1 domain in the interval 64–139; it reads TSKCLLLKAR…TDKGDQSLRC (76 aa). Disulfide bonds link Cys-67/Cys-102, Cys-113/Cys-119, and Cys-121/Cys-139. Asn-114 carries an N-linked (GlcNAc...) asparagine glycan. Residues Asn-162 and Asn-202 are each glycosylated (N-linked (GlcNAc...) asparagine). A helical membrane pass occupies residues 271-291; sequence LIAVIAVVAVALVAGVVVLVV. Over 292-317 the chain is Cytoplasmic; that stretch reads TNRRKSGKYKKVELKELGEMRSEPSL.

Belongs to the EPCAM family.

Its subcellular location is the membrane. May function as a growth factor receptor. This is Tumor-associated calcium signal transducer 2 (Tacstd2) from Rattus norvegicus (Rat).